The following is a 415-amino-acid chain: Tyrosine--tRNA ligase (415 aa).

Residues 54–63 (PTGRDIHLGH) carry the 'HIGH' region motif. The 'KMSKS' region signature appears at 248–252 (KMSKS). Lysine 251 contributes to the ATP binding site. The region spanning 351–415 (AKAFYLLSAI…GKKTFRRLTR (65 aa)) is the S4 RNA-binding domain.

The protein belongs to the class-I aminoacyl-tRNA synthetase family. TyrS type 2 subfamily. As to quaternary structure, homodimer.

It localises to the cytoplasm. The enzyme catalyses tRNA(Tyr) + L-tyrosine + ATP = L-tyrosyl-tRNA(Tyr) + AMP + diphosphate + H(+). Its function is as follows. Catalyzes the attachment of tyrosine to tRNA(Tyr) in a two-step reaction: tyrosine is first activated by ATP to form Tyr-AMP and then transferred to the acceptor end of tRNA(Tyr). The polypeptide is Tyrosine--tRNA ligase (Prochlorococcus marinus (strain MIT 9313)).